We begin with the raw amino-acid sequence, 952 residues long: Protein translocase subunit SecA (952 aa).

ATP is bound by residues glutamine 135, 153–157 (GEGKT), and aspartate 575. Residues 907–921 (AAPAAAIPGVSAKAA) show a composition bias toward low complexity. The interval 907-946 (AAPAAAIPGVSAKAATQSTTPAAKEIGRNDPCPCGSGKKY) is disordered. The Zn(2+) site is built by cysteine 938, cysteine 940, cysteine 949, and cysteine 950.

Belongs to the SecA family. As to quaternary structure, monomer and homodimer. Part of the essential Sec protein translocation apparatus which comprises SecA, SecYEG and auxiliary proteins SecDF. Other proteins may also be involved. Zn(2+) is required as a cofactor.

The protein resides in the cell membrane. It is found in the cytoplasm. The catalysed reaction is ATP + H2O + cellular proteinSide 1 = ADP + phosphate + cellular proteinSide 2.. In terms of biological role, part of the Sec protein translocase complex. Interacts with the SecYEG preprotein conducting channel. Has a central role in coupling the hydrolysis of ATP to the transfer of proteins into and across the cell membrane, serving as an ATP-driven molecular motor driving the stepwise translocation of polypeptide chains across the membrane. This Dehalococcoides mccartyi (strain CBDB1) protein is Protein translocase subunit SecA.